A 416-amino-acid polypeptide reads, in one-letter code: Gamma-glutamyl phosphate reductase (416 aa).

Belongs to the gamma-glutamyl phosphate reductase family.

The protein resides in the cytoplasm. It carries out the reaction L-glutamate 5-semialdehyde + phosphate + NADP(+) = L-glutamyl 5-phosphate + NADPH + H(+). It functions in the pathway amino-acid biosynthesis; L-proline biosynthesis; L-glutamate 5-semialdehyde from L-glutamate: step 2/2. In terms of biological role, catalyzes the NADPH-dependent reduction of L-glutamate 5-phosphate into L-glutamate 5-semialdehyde and phosphate. The product spontaneously undergoes cyclization to form 1-pyrroline-5-carboxylate. The protein is Gamma-glutamyl phosphate reductase of Petrotoga mobilis (strain DSM 10674 / SJ95).